A 437-amino-acid chain; its full sequence is Lipid II isoglutaminyl synthase (glutamine-hydrolyzing) subunit MurT (437 aa).

Zn(2+) contacts are provided by C202, C205, C224, and C226. Residue D349 is part of the active site.

It belongs to the MurCDEF family. MurT subfamily. As to quaternary structure, forms a heterodimer with GatD.

The catalysed reaction is beta-D-GlcNAc-(1-&gt;4)-Mur2Ac(oyl-L-Ala-gamma-D-Glu-L-Lys-D-Ala-D-Ala)-di-trans,octa-cis-undecaprenyl diphosphate + L-glutamine + ATP + H2O = beta-D-GlcNAc-(1-&gt;4)-Mur2Ac(oyl-L-Ala-D-isoglutaminyl-L-Lys-D-Ala-D-Ala)-di-trans,octa-cis-undecaprenyl diphosphate + L-glutamate + ADP + phosphate + H(+). It carries out the reaction beta-D-GlcNAc-(1-&gt;4)-Mur2Ac(oyl-L-Ala-gamma-D-Glu-L-Lys-D-Ala-D-Ala)-di-trans,octa-cis-undecaprenyl diphosphate + ATP = beta-D-GlcNAc-(1-&gt;4)-Mur2Ac(oyl-L-Ala-gamma-D-O-P-Glu-L-Lys-D-Ala-D-Ala)-di-trans,octa-cis-undecaprenyl diphosphate + ADP. It catalyses the reaction beta-D-GlcNAc-(1-&gt;4)-Mur2Ac(oyl-L-Ala-gamma-D-O-P-Glu-L-Lys-D-Ala-D-Ala)-di-trans,octa-cis-undecaprenyl diphosphate + NH4(+) = beta-D-GlcNAc-(1-&gt;4)-Mur2Ac(oyl-L-Ala-D-isoglutaminyl-L-Lys-D-Ala-D-Ala)-di-trans,octa-cis-undecaprenyl diphosphate + phosphate + H(+). Its pathway is cell wall biogenesis; peptidoglycan biosynthesis. Its function is as follows. The lipid II isoglutaminyl synthase complex catalyzes the formation of alpha-D-isoglutamine in the cell wall lipid II stem peptide. The MurT subunit catalyzes the ATP-dependent amidation of D-glutamate residue of lipid II, converting it to an isoglutamine residue. The sequence is that of Lipid II isoglutaminyl synthase (glutamine-hydrolyzing) subunit MurT from Staphylococcus aureus (strain N315).